A 499-amino-acid chain; its full sequence is Serine/threonine-protein phosphatase 5 (499 aa).

Positions Met-1 to Gly-23 are disordered. At Ala-2 the chain carries N-acetylalanine. TPR repeat units lie at residues Ala-28 to Asn-61, Ala-62 to Tyr-95, and Ile-96 to Asp-129. Residues Gly-184 to Met-499 form a catalytic region. Mn(2+)-binding residues include Asp-242, His-244, and Asp-271. His-244 is a substrate binding site. Residues Arg-275 and Asn-303–His-304 each bind substrate. Asn-303 contacts Mn(2+). His-304 serves as the catalytic Proton donor/acceptor. Mn(2+) is bound at residue His-352. Arg-400 and His-427 together coordinate substrate. His-427 contributes to the Mn(2+) binding site. The required for autoinhibition stretch occupies residues Gln-495–Met-499.

Belongs to the PPP phosphatase family. PP-5 (PP-T) subfamily. Probably forms a complex composed of chaperones HSP90 and HSP70, co-chaperones STIP1/HOP, CDC37, PPP5C, PTGES3/p23, TSC1 and client protein TSC2. Probably forms a complex composed of chaperones HSP90 and HSP70, co-chaperones CDC37, PPP5C, TSC1 and client protein TSC2, CDK4, AKT, RAF1 and NR3C1; this complex does not contain co-chaperones STIP1/HOP and PTGES3/p23. Part of a complex with HSP90/HSP90AA1 and steroid receptors. Interacts (via TPR repeats) with HSP90AA1 (via TPR repeat-binding motif) or HSPA1A/HSPA1B; the interaction is direct and activates the phosphatase activity. Dissociates from HSPA1A/HSPA1B and HSP90AA1 in response to arachidonic acid. Interacts with CPNE1 (via VWFA domain). Interacts with CDC16, CDC27. Interacts with KLHDC10 (via the 6 Kelch repeats); inhibits the phosphatase activity on MAP3K5. Interacts with ATM and ATR; both interactions are induced by DNA damage and enhance ATM and ATR kinase activity. Interacts with RAD17; reduced by DNA damage. Interacts with nuclear receptors such as NR3C1/GCR and PPARG (activated by agonist); regulates their transactivation activities. Interacts (via TPR repeats) with S100 proteins S100A1, S100A2, S100A6, S100B and S100P; the interactions are calcium-dependent, strongly activate PPP5C phosphatase activity and compete with HSP90AA1 and MAP3K5 interactions. Interacts with SMAD2 and SMAD3 but not with SMAD1; decreases SMAD3 phosphorylation and protein levels. Interacts (via TPR repeats) with CRY1 and CRY2; the interaction with CRY2 down-regulates the phosphatase activity on CSNK1E. Interacts (via TPR repeats) with the active form of RAC1, GNA12 or GNA13; these interactions activate the phosphatase activity and translocate PPP5C to the cell membrane. Interacts with FLCN. It depends on Mg(2+) as a cofactor. Mn(2+) serves as cofactor. Activated by at least two different proteolytic cleavages producing a 56 kDa and a 50 kDa form. Ubiquitous.

It localises to the nucleus. Its subcellular location is the cytoplasm. The protein resides in the cell membrane. It carries out the reaction O-phospho-L-seryl-[protein] + H2O = L-seryl-[protein] + phosphate. The enzyme catalyses O-phospho-L-threonyl-[protein] + H2O = L-threonyl-[protein] + phosphate. Its activity is regulated as follows. Autoinhibited. In the autoinhibited state, the TPR domain interacts with the catalytic region and prevents substrate access to the catalytic pocket. Allosterically activated by various polyunsaturated fatty acids, free long-chain fatty-acids and long-chain fatty acyl-CoA esters, arachidonic acid being the most effective activator. HSP90A and probably RAC1, GNA12 and GNA13 can also release the autoinhibition by the TPR repeat. Activation by RAC1, GNA12 and GNA13 is synergistic with the one produced by fatty acids binding. Inhibited by okadaic acid. Its function is as follows. Serine/threonine-protein phosphatase that dephosphorylates a myriad of proteins involved in different signaling pathways including the kinases CSNK1E, ASK1/MAP3K5, PRKDC and RAF1, the nuclear receptors NR3C1, PPARG, ESR1 and ESR2, SMAD proteins and TAU/MAPT. Implicated in wide ranging cellular processes, including apoptosis, differentiation, DNA damage response, cell survival, regulation of ion channels or circadian rhythms, in response to steroid and thyroid hormones, calcium, fatty acids, TGF-beta as well as oxidative and genotoxic stresses. Participates in the control of DNA damage response mechanisms such as checkpoint activation and DNA damage repair through, for instance, the regulation ATM/ATR-signaling and dephosphorylation of PRKDC and TP53BP1. Inhibits ASK1/MAP3K5-mediated apoptosis induced by oxidative stress. Plays a positive role in adipogenesis, mainly through the dephosphorylation and activation of PPARG transactivation function. Also dephosphorylates and inhibits the anti-adipogenic effect of NR3C1. Regulates the circadian rhythms, through the dephosphorylation and activation of CSNK1E. May modulate TGF-beta signaling pathway by the regulation of SMAD3 phosphorylation and protein expression levels. Dephosphorylates and may play a role in the regulation of TAU/MAPT. Through their dephosphorylation, may play a role in the regulation of ions channels such as KCNH2. Dephosphorylate FNIP1, disrupting interaction with HSP90AA1/Hsp90. This is Serine/threonine-protein phosphatase 5 (PPP5C) from Homo sapiens (Human).